The primary structure comprises 776 residues: FT-interacting protein 4 (776 aa).

The segment covering 1 to 16 has biased composition (basic and acidic residues); that stretch reads MQRPPPEDFSLKETKP. Residues 1–23 are disordered; sequence MQRPPPEDFSLKETKPHLGGGKV. C2 domains lie at 22–142, 181–305, and 346–474; these read KVTG…PQWY, VSGT…SRWF, and YSSD…THSY. The Ca(2+) site is built by aspartate 55, aspartate 61, aspartate 108, aspartate 110, and aspartate 115. Transmembrane regions (helical) follow at residues 577 to 597, 608 to 628, and 719 to 739; these read IMGV…ICVW, ILFI…FLYL, and LFVL…FQVV.

This sequence belongs to the MCTP family. As to quaternary structure, interacts with and regulates subcellular localization and trafficking of STM. Ca(2+) serves as cofactor. In terms of tissue distribution, highly expressed in both vegetative and inflorescence shoot apical meristems (SAMs). Accumulates in root meristems. Observed in flowers.

The protein localises to the endoplasmic reticulum membrane. Its subcellular location is the cytoplasm. The protein resides in the vesicle. It is found in the cell membrane. It localises to the endosome membrane. The protein localises to the golgi apparatus membrane. In terms of biological role, required for proliferation and differentiation of shoot stem cells in the shoot apical meristem (SAM), thus determining the appropriate balance between the maintenance of shoot stem cells and their differentiation into other aboveground plant parts via the control of subcellular localization and intercellular trafficking of STM in the shoot apex. Prevents intracellular trafficking of STM to the plasma membrane in cells in the peripheral shoot meristem region thus facilitating STM recycling to the nucleus to maintain stem cells. May function as a signaling molecule by regulating the trafficking of other regulators. The sequence is that of FT-interacting protein 4 from Arabidopsis thaliana (Mouse-ear cress).